Reading from the N-terminus, the 174-residue chain is Late lactation protein B (174 aa).

The N-terminal stretch at 1-18 is a signal peptide; the sequence is MKVLFLTIALSLFSILQA. Cys-77 and Cys-169 are oxidised to a cystine.

It belongs to the calycin superfamily. Lipocalin family. As to expression, mammary gland specific. Secreted in milk.

The protein localises to the secreted. Its function is as follows. Probably serves a role in the transport of a small ligand released during the hydrolysis of milk fat. This Notamacropus eugenii (Tammar wallaby) protein is Late lactation protein B (LLPB).